The sequence spans 265 residues: Indole-3-glycerol phosphate synthase (265 aa).

It belongs to the TrpC family.

The enzyme catalyses 1-(2-carboxyphenylamino)-1-deoxy-D-ribulose 5-phosphate + H(+) = (1S,2R)-1-C-(indol-3-yl)glycerol 3-phosphate + CO2 + H2O. The protein operates within amino-acid biosynthesis; L-tryptophan biosynthesis; L-tryptophan from chorismate: step 4/5. The polypeptide is Indole-3-glycerol phosphate synthase (Xanthomonas axonopodis pv. citri (strain 306)).